The primary structure comprises 186 residues: Cytochrome c oxidase subunit 4, mitochondrial (186 aa).

The N-terminal 31 residues, 1 to 31 (MLLSRTAVAVARRATAAPALRRSIATTVVRC), are a transit peptide targeting the mitochondrion. Residues C118, H126, C142, and C145 each coordinate Zn(2+).

Belongs to the cytochrome c oxidase subunit 5B family. As to quaternary structure, component of the cytochrome c oxidase (complex IV, CIV), a multisubunit enzyme composed of 11 subunits. The complex is composed of a catalytic core of 3 subunits Cox1, Cox2 and Cox3, encoded in the mitochondrial DNA, and 8 supernumerary subunits Cox4, Cox5a/Cox5, Cox6, Cox7, Cox8, Cox7a/Cox9, Cox6b/Cox12 and Cox6a/Cox13, which are encoded in the nuclear genome. The complex exists as a monomer or a dimer and forms respiratory supercomplexes (SCs) in the inner mitochondrial membrane with NADH-ubiquinone oxidoreductase (complex I, CI) and ubiquinol-cytochrome c oxidoreductase (cytochrome b-c1 complex, complex III, CIII), resulting in various different assemblies (supercomplexes I(1)IV(1), I(1)III(3)IV(2), III(2)IV(1) and III(2)IV(2) as well as larger supercomplexes of compositions like I(1)III(2)IV(5-6)).

Its subcellular location is the mitochondrion inner membrane. The protein operates within energy metabolism; oxidative phosphorylation. Its function is as follows. Component of the cytochrome c oxidase, the last enzyme in the mitochondrial electron transport chain which drives oxidative phosphorylation. The respiratory chain contains 3 multisubunit complexes succinate dehydrogenase (complex II, CII), ubiquinol-cytochrome c oxidoreductase (cytochrome b-c1 complex, complex III, CIII) and cytochrome c oxidase (complex IV, CIV), that cooperate to transfer electrons derived from NADH and succinate to molecular oxygen, creating an electrochemical gradient over the inner membrane that drives transmembrane transport and the ATP synthase. Cytochrome c oxidase is the component of the respiratory chain that catalyzes the reduction of oxygen to water. Electrons originating from reduced cytochrome c in the intermembrane space (IMS) are transferred via the dinuclear copper A center (CU(A)) of Cox2 and heme A of Cox1 to the active site in Cox1, a binuclear center (BNC) formed by heme A3 and copper B (CU(B)). The BNC reduces molecular oxygen to 2 water molecules using 4 electrons from cytochrome c in the IMS and 4 protons from the mitochondrial matrix. The polypeptide is Cytochrome c oxidase subunit 4, mitochondrial (cox-4) (Neurospora crassa (strain ATCC 24698 / 74-OR23-1A / CBS 708.71 / DSM 1257 / FGSC 987)).